The following is a 489-amino-acid chain: MTSKYFSVLVFIILASNEVVAKRHSSTPKLRKTDFPEDFIFGAATSAYQVEGAAQEDGRGPSIWDTFSEKYPEKIKDGSNGSIADDSYHLYKEDVGLLHQIGFNAYRFSISWSRILPRGNLKGGINQAGIDYYNNLINELLSKGIKPFATIFHWDTPQDLEDAYGGFRGAEIVNDFRDYADICFKSFGDRVKHWITLNEPLTVVQQGYVAGVMAPGRCSKFTNPNCTAGNGATEPYIVGHNLILAHGEAIKVYRKKYKASQKGQVGIALNAGWNLPYTESAEDRLAAARAMAFTFDYFMEPLVTGKYPVDMVNNVKGGRLPTFTSKQSNMLKGSYDFIGINYYSSSYAKDVPCSSENVTMFSDPCASVTGERDGGIRDLILYAKYKFKDPVMYITENGRDEASTGKILLKDGDRIDYYARHLKMVQDAILIGANVKGFFAWSLLDNFEWASGYTVRFGLVYVDFNDRRKRYLKKSAHWFRHLLNGKKEN.

The signal sequence occupies residues 1–21; it reads MTSKYFSVLVFIILASNEVVA. Residue Q49 participates in a beta-D-glucoside binding. N80 is a glycosylation site (N-linked (GlcNAc...) asparagine). A beta-D-glucoside-binding positions include H153 and 198-199; that span reads NE. E199 functions as the Proton donor in the catalytic mechanism. C218 and C226 form a disulfide bridge. A glycan (N-linked (GlcNAc...) asparagine) is linked at N225. Residue Y343 participates in a beta-D-glucoside binding. N357 is a glycosylation site (N-linked (GlcNAc...) asparagine). A beta-D-glucoside is bound by residues E396, W441, 448 to 449, and F457; that span reads EW. The active-site Nucleophile is E396.

The protein belongs to the glycosyl hydrolase 1 family.

The enzyme catalyses Hydrolysis of terminal, non-reducing beta-D-glucosyl residues with release of beta-D-glucose.. The protein is Beta-glucosidase 14 of Arabidopsis thaliana (Mouse-ear cress).